We begin with the raw amino-acid sequence, 569 residues long: Paxillin-B (569 aa).

Residues 10–18 (DLDLLLADL) carry the LD motif 1 motif. Polar residues predominate over residues 62–78 (QPQTVQTISTPAPKNHN). The disordered stretch occupies residues 62–103 (QPQTVQTISTPAPKNHNTTTTTASFSVSSQPAPQPPQQSQQI). Residues 79–102 (TTTTTASFSVSSQPAPQPPQQSQQ) are compositionally biased toward low complexity. Residues 106–112 (LDDLDEL) carry the LD motif 2 motif. The tract at residues 129–311 (TTPEEHITHA…SPKVVHGDDL (183 aa)) is disordered. Positions 150–161 (NTSSTNSASSLS) are enriched in low complexity. Polar residues-rich tracts occupy residues 162–188 (RPNN…TTKK) and 196–206 (TLETTSGNNVY). Low complexity predominate over residues 207-217 (SSQPSQSQPQP). Residues 232–239 (LDELLKGL) carry the LD motif 3 motif. The segment covering 258–272 (HQHHHQHQHHHHHNP) has biased composition (basic residues). Residues 273–301 (NHNQTQTVTTQINIGRTNTPNNNNNNNTN) show a composition bias toward low complexity. The LD motif 4 signature appears at 311-318 (LDNLLNNL). LIM zinc-binding domains lie at 334 to 391 (GTCG…QELF), 393 to 452 (ARCA…TFAV), 453 to 510 (RCGG…QQAG), and 511 to 569 (SVCS…KLFA).

It belongs to the paxillin family. As to expression, expressed in the upper and lower cup of the fruiting body.

The protein resides in the cytoplasm. Its subcellular location is the cell cortex. It localises to the cell projection. The protein localises to the filopodium. It is found in the cell junction. The protein resides in the focal adhesion. Its subcellular location is the cytoskeleton. Its function is as follows. Required for cell-substrate adhesion, cell sorting, slug migration, and cell differentiation. May function upstream of limB. This Dictyostelium discoideum (Social amoeba) protein is Paxillin-B (paxB).